Consider the following 276-residue polypeptide: Large ribosomal subunit protein uL2 (276 aa).

2 disordered regions span residues 37 to 59 and 225 to 276; these read QFQK…GGHK and VMNP…RHKR. Positions 39–49 are enriched in polar residues; sequence QKSGRNNNGHI. A compositionally biased stretch (basic residues) spans 50-59; it reads TTRHKGGGHK.

This sequence belongs to the universal ribosomal protein uL2 family. As to quaternary structure, part of the 50S ribosomal subunit. Forms a bridge to the 30S subunit in the 70S ribosome.

In terms of biological role, one of the primary rRNA binding proteins. Required for association of the 30S and 50S subunits to form the 70S ribosome, for tRNA binding and peptide bond formation. It has been suggested to have peptidyltransferase activity; this is somewhat controversial. Makes several contacts with the 16S rRNA in the 70S ribosome. The sequence is that of Large ribosomal subunit protein uL2 from Cupriavidus pinatubonensis (strain JMP 134 / LMG 1197) (Cupriavidus necator (strain JMP 134)).